We begin with the raw amino-acid sequence, 123 residues long: Large ribosomal subunit protein bL12 (123 aa).

The protein belongs to the bacterial ribosomal protein bL12 family. Homodimer. Part of the ribosomal stalk of the 50S ribosomal subunit. Forms a multimeric L10(L12)X complex, where L10 forms an elongated spine to which 2 to 4 L12 dimers bind in a sequential fashion. Binds GTP-bound translation factors.

Its function is as follows. Forms part of the ribosomal stalk which helps the ribosome interact with GTP-bound translation factors. Is thus essential for accurate translation. The sequence is that of Large ribosomal subunit protein bL12 from Neisseria perflava.